The chain runs to 1169 residues: Transcription-repair-coupling factor (1169 aa).

Residues 634 to 795 (DMERARPMDR…MLGVRDLSVI (162 aa)) enclose the Helicase ATP-binding domain. 647 to 654 (GDVGYGKT) provides a ligand contact to ATP. Residues 748–751 (DEEQ) carry the DEEQ box motif. One can recognise a Helicase C-terminal domain in the interval 809 to 970 (VLEQNTNFIK…GFKIAMRDLN (162 aa)).

The protein in the N-terminal section; belongs to the UvrB family. This sequence in the C-terminal section; belongs to the helicase family. RecG subfamily.

The protein localises to the cytoplasm. In terms of biological role, couples transcription and DNA repair by recognizing RNA polymerase (RNAP) stalled at DNA lesions. Mediates ATP-dependent release of RNAP and its truncated transcript from the DNA, and recruitment of nucleotide excision repair machinery to the damaged site. The polypeptide is Transcription-repair-coupling factor (Staphylococcus epidermidis (strain ATCC 35984 / DSM 28319 / BCRC 17069 / CCUG 31568 / BM 3577 / RP62A)).